Reading from the N-terminus, the 263-residue chain is Tetraspanin-7 (263 aa).

Over 1–7 the chain is Cytoplasmic; the sequence is MVQCSNN. Residues 8–28 traverse the membrane as a helical segment; it reads LLGILNFFTFLLSIPILSAGI. Residues 29–45 lie on the Extracellular side of the membrane; that stretch reads WLGKNAATECERFLDKP. A helical transmembrane segment spans residues 46–66; sequence MVVLGIFLMFVSIAGLVGACC. Residues 67 to 75 are Cytoplasmic-facing; the sequence is RVSCLLWLY. A helical transmembrane segment spans residues 76 to 96; sequence LFAMFLLILLGFCFTIFAFAV. At 97–234 the chain is on the extracellular side; that stretch reads TNRGAGEVIS…NIKNSWKKVA (138 aa). Residue Asn180 is glycosylated (N-linked (GlcNAc...) asparagine). Residues 235 to 255 traverse the membrane as a helical segment; it reads KVNIVFLIFLIIVYSVGCCAF. The Cytoplasmic portion of the chain corresponds to 256–263; that stretch reads RNNRKRSW.

The protein belongs to the tetraspanin (TM4SF) family.

The protein resides in the membrane. May be involved in the regulation of cell differentiation. This Arabidopsis thaliana (Mouse-ear cress) protein is Tetraspanin-7 (TET7).